We begin with the raw amino-acid sequence, 262 residues long: 3-methyl-2-oxobutanoate hydroxymethyltransferase (262 aa).

Positions 42 and 81 each coordinate Mg(2+). 3-methyl-2-oxobutanoate is bound by residues 42-43 (DS), D81, and K110. Residue E112 participates in Mg(2+) binding. Catalysis depends on E179, which acts as the Proton acceptor.

This sequence belongs to the PanB family. In terms of assembly, homodecamer; pentamer of dimers. It depends on Mg(2+) as a cofactor.

The protein localises to the cytoplasm. It catalyses the reaction 3-methyl-2-oxobutanoate + (6R)-5,10-methylene-5,6,7,8-tetrahydrofolate + H2O = 2-dehydropantoate + (6S)-5,6,7,8-tetrahydrofolate. The protein operates within cofactor biosynthesis; (R)-pantothenate biosynthesis; (R)-pantoate from 3-methyl-2-oxobutanoate: step 1/2. Its function is as follows. Catalyzes the reversible reaction in which hydroxymethyl group from 5,10-methylenetetrahydrofolate is transferred onto alpha-ketoisovalerate to form ketopantoate. This is 3-methyl-2-oxobutanoate hydroxymethyltransferase from Methylobacillus flagellatus (strain ATCC 51484 / DSM 6875 / VKM B-1610 / KT).